A 265-amino-acid polypeptide reads, in one-letter code: Reduced viability upon starvation protein 161 (265 aa).

The BAR domain maps to His15 to Ala239. Residues Tyr126–Leu193 are a coiled coil.

The protein resides in the cytoplasm. Its subcellular location is the cytoskeleton. In terms of biological role, component of a cytoskeletal structure that is required for the formation of endocytic vesicles at the plasma membrane level. The protein is Reduced viability upon starvation protein 161 (RVS161) of Saccharomyces cerevisiae (strain ATCC 204508 / S288c) (Baker's yeast).